The chain runs to 455 residues: Bifunctional protein GlmU (455 aa).

A pyrophosphorylase region spans residues 1 to 225 (MNIVILAAGM…EWETLGVNSK (225 aa)). Residues 6–9 (LAAG), lysine 20, glutamine 71, 76–77 (GT), 98–100 (YGD), glycine 135, glutamate 150, asparagine 165, and asparagine 223 each bind UDP-N-acetyl-alpha-D-glucosamine. Residue aspartate 100 coordinates Mg(2+). Asparagine 223 is a binding site for Mg(2+). Positions 226–246 (VQLAELERIHQRNLAQQLLED) are linker. Positions 247 to 455 (GVTLIDPARI…QRPVKQKKEG (209 aa)) are N-acetyltransferase. Positions 329 and 347 each coordinate UDP-N-acetyl-alpha-D-glucosamine. The Proton acceptor role is filled by histidine 359. Tyrosine 362 and asparagine 373 together coordinate UDP-N-acetyl-alpha-D-glucosamine. Residues alanine 376, 382–383 (NY), serine 401, alanine 419, and arginine 436 contribute to the acetyl-CoA site.

In the N-terminal section; belongs to the N-acetylglucosamine-1-phosphate uridyltransferase family. This sequence in the C-terminal section; belongs to the transferase hexapeptide repeat family. In terms of assembly, homotrimer. Requires Mg(2+) as cofactor.

It is found in the cytoplasm. The enzyme catalyses alpha-D-glucosamine 1-phosphate + acetyl-CoA = N-acetyl-alpha-D-glucosamine 1-phosphate + CoA + H(+). It carries out the reaction N-acetyl-alpha-D-glucosamine 1-phosphate + UTP + H(+) = UDP-N-acetyl-alpha-D-glucosamine + diphosphate. It functions in the pathway nucleotide-sugar biosynthesis; UDP-N-acetyl-alpha-D-glucosamine biosynthesis; N-acetyl-alpha-D-glucosamine 1-phosphate from alpha-D-glucosamine 6-phosphate (route II): step 2/2. Its pathway is nucleotide-sugar biosynthesis; UDP-N-acetyl-alpha-D-glucosamine biosynthesis; UDP-N-acetyl-alpha-D-glucosamine from N-acetyl-alpha-D-glucosamine 1-phosphate: step 1/1. The protein operates within bacterial outer membrane biogenesis; LPS lipid A biosynthesis. Functionally, catalyzes the last two sequential reactions in the de novo biosynthetic pathway for UDP-N-acetylglucosamine (UDP-GlcNAc). The C-terminal domain catalyzes the transfer of acetyl group from acetyl coenzyme A to glucosamine-1-phosphate (GlcN-1-P) to produce N-acetylglucosamine-1-phosphate (GlcNAc-1-P), which is converted into UDP-GlcNAc by the transfer of uridine 5-monophosphate (from uridine 5-triphosphate), a reaction catalyzed by the N-terminal domain. The protein is Bifunctional protein GlmU of Ralstonia pickettii (strain 12J).